We begin with the raw amino-acid sequence, 834 residues long: Glycerol-3-phosphate acyltransferase (834 aa).

Residues 309-314 carry the HXXXXD motif motif; it reads CHRSHI.

This sequence belongs to the GPAT/DAPAT family.

It is found in the cell inner membrane. The enzyme catalyses sn-glycerol 3-phosphate + an acyl-CoA = a 1-acyl-sn-glycero-3-phosphate + CoA. It participates in phospholipid metabolism; CDP-diacylglycerol biosynthesis; CDP-diacylglycerol from sn-glycerol 3-phosphate: step 1/3. This chain is Glycerol-3-phosphate acyltransferase, found in Pseudomonas paraeruginosa (strain DSM 24068 / PA7) (Pseudomonas aeruginosa (strain PA7)).